The primary structure comprises 240 residues: UPF0173 metal-dependent hydrolase OE_2513F (240 aa).

Belongs to the UPF0173 family.

This Halobacterium salinarum (strain ATCC 29341 / DSM 671 / R1) protein is UPF0173 metal-dependent hydrolase OE_2513F.